The chain runs to 481 residues: Ammonium transporter 2 member 3 (481 aa).

At 1–36 (MNFNSSKYISHLPESLLPNDASPEWNNKADNAWQLT) the chain is on the extracellular side. N-linked (GlcNAc...) asparagine glycosylation occurs at Asn-4. The helical transmembrane segment at 37 to 57 (AATLVGLQTVPGLVILYGSMV) threads the bilayer. Residues 58–62 (KKKWA) are Cytoplasmic-facing. Residues 63 to 83 (VNSAFMALYAFAAVLVCWVLW) traverse the membrane as a helical segment. Residues 84–123 (AHHMAFGTKLLPFVGKPNFALSQKFLLSKASTNYYLPMAD) lie on the Extracellular side of the membrane. A helical transmembrane segment spans residues 124–144 (FVFYQFAFAAITLVLLGGSLL). The Cytoplasmic portion of the chain corresponds to 145–151 (GRMNFYA). The helical transmembrane segment at 152–172 (WMLFVPLWLTLSYTVGAFTIW) threads the bilayer. Topologically, residues 173–184 (GNGFLEGKIIDY) are extracellular. Residues 185–205 (AGGFVIHLSSGVAGFTAAYWV) traverse the membrane as a helical segment. The Cytoplasmic segment spans residues 206–220 (GPRTSNDRQNFPPNN). A helical membrane pass occupies residues 221-241 (IIHMLGGAGFLWMGWTGFNGG). Residues 242-248 (APFQVGE) are Extracellular-facing. Residues 249–269 (ITSLAIFNTHLCTATSILVWI) form a helical membrane-spanning segment. Topologically, residues 270 to 281 (SLDMAVYKKGSL) are cytoplasmic. A helical transmembrane segment spans residues 282–302 (IGSVQGMMTGLVCITPGAGLV). The Extracellular portion of the chain corresponds to 303-304 (DP). The chain crosses the membrane as a helical span at residues 305–325 (WAAILMGALSGSIPWYTMMVL). At 326 to 338 (HKKSPFFQSVDDT) the chain is on the cytoplasmic side. A helical transmembrane segment spans residues 339–359 (LGVFHTHAVAGILGGILSGVF). The Extracellular portion of the chain corresponds to 360–363 (AKPK). A helical transmembrane segment spans residues 364-381 (LLRILYGPYGSGLLYSYF). Over 382–395 (DDNIGQGIKQMWYQ) the chain is Cytoplasmic. The helical transmembrane segment at 396-416 (LLGAVFITIWNVVITSLICIL) threads the bilayer. Topologically, residues 417–481 (LNRFVNLRMQ…HSFPINKIDE (65 aa)) are extracellular.

The protein belongs to the ammonia transporter channel (TC 1.A.11.2) family. As to expression, mostly expressed in mycorrhizal roots. Also observed in the cortex and endodermis of non-mycorrhizal roots.

Its subcellular location is the cell membrane. In terms of biological role, involved in ammonium transport. Required for arbuscular mycorrhizal (AM) symbiosis with AM fungi (e.g. Glomus versiforme and G.intraradices) in low nitrogen conditions. In Medicago truncatula (Barrel medic), this protein is Ammonium transporter 2 member 3.